A 127-amino-acid chain; its full sequence is Chondrosarcoma-associated gene 2/3 protein (127 aa).

The disordered stretch occupies residues 68 to 127 (MSRKPRASSPLSNNHPPTPKRRGSGRHPLNPGPEALSKFPRQPGREKGPIKEVPGTKGSP).

Weakly expressed in kidney. Expressed in various tumor cell lines including carcinomas, myeloid and lymphoid malignancies, melanomas and prostate cancer. Overexpressed in taxol-resistant breast cancer line MDA 435TR and the doxorubicin-resistant multiple myelanoma lines RPMI-8226/Dox40 and RPMI-8226/MDR10V.

Functionally, drug-resistance related protein, its expression is associated with the chemotherapy resistant and neoplastic phenotype. May also be linked to the malignant phenotype. This chain is Chondrosarcoma-associated gene 2/3 protein (CSAG2), found in Homo sapiens (Human).